A 254-amino-acid polypeptide reads, in one-letter code: 5-oxoprolinase subunit A (254 aa).

This sequence belongs to the LamB/PxpA family. As to quaternary structure, forms a complex composed of PxpA, PxpB and PxpC.

The enzyme catalyses 5-oxo-L-proline + ATP + 2 H2O = L-glutamate + ADP + phosphate + H(+). In terms of biological role, catalyzes the cleavage of 5-oxoproline to form L-glutamate coupled to the hydrolysis of ATP to ADP and inorganic phosphate. The protein is 5-oxoprolinase subunit A of Carboxydothermus hydrogenoformans (strain ATCC BAA-161 / DSM 6008 / Z-2901).